Consider the following 95-residue polypeptide: MSLSENQVSQIAHLACLSLNEAQLKDNTQNLNTITSLFEQLANIEIDGVEPMLHPLHMFQRLREDVVSEKEQLALFQSIAPKVRNGYYLVPTVIK.

This sequence belongs to the GatC family. As to quaternary structure, heterotrimer of A, B and C subunits.

The enzyme catalyses L-glutamyl-tRNA(Gln) + L-glutamine + ATP + H2O = L-glutaminyl-tRNA(Gln) + L-glutamate + ADP + phosphate + H(+). The catalysed reaction is L-aspartyl-tRNA(Asn) + L-glutamine + ATP + H2O = L-asparaginyl-tRNA(Asn) + L-glutamate + ADP + phosphate + 2 H(+). Its function is as follows. Allows the formation of correctly charged Asn-tRNA(Asn) or Gln-tRNA(Gln) through the transamidation of misacylated Asp-tRNA(Asn) or Glu-tRNA(Gln) in organisms which lack either or both of asparaginyl-tRNA or glutaminyl-tRNA synthetases. The reaction takes place in the presence of glutamine and ATP through an activated phospho-Asp-tRNA(Asn) or phospho-Glu-tRNA(Gln). This Vesicomyosocius okutanii subsp. Calyptogena okutanii (strain HA) protein is Aspartyl/glutamyl-tRNA(Asn/Gln) amidotransferase subunit C.